Reading from the N-terminus, the 572-residue chain is BOS complex subunit ncln (572 aa).

Residues 1-35 (MFEEAGEVLENMLKVSFPLSLVLFLVLVCPLRAEA) form the signal peptide. The Extracellular portion of the chain corresponds to 36–530 (AHEFSVYRMQ…TMNAYRVKPA (495 aa)). 3 N-linked (GlcNAc...) asparagine glycosylation sites follow: asparagine 108, asparagine 234, and asparagine 436. Residues 531–551 (IFDLLLAVCIASYLGVLYLAI) traverse the membrane as a helical segment. Residues 552–572 (QNFGLLYGFLRRVTAPRVKQH) lie on the Cytoplasmic side of the membrane.

Belongs to the nicastrin family. As to quaternary structure, component of the multi-pass translocon (MPT) complex.

Its subcellular location is the endoplasmic reticulum membrane. Its function is as follows. Component of the multi-pass translocon (MPT) complex that mediates insertion of multi-pass membrane proteins into the lipid bilayer of membranes. The MPT complex takes over after the SEC61 complex: following membrane insertion of the first few transmembrane segments of proteins by the SEC61 complex, the MPT complex occludes the lateral gate of the SEC61 complex to promote insertion of subsequent transmembrane regions. Antagonizes Nodal signaling and subsequent organization of axial structures during mesodermal patterning. Ectopic expression results in cyclopia, due to a defect in mesendoderm patterning. The polypeptide is BOS complex subunit ncln (ncln) (Danio rerio (Zebrafish)).